Reading from the N-terminus, the 591-residue chain is Isocitrate dehydrogenase kinase/phosphatase (591 aa).

ATP-binding positions include Ala322 to Leu328 and Lys343. Asp378 is an active-site residue.

This sequence belongs to the AceK family.

It is found in the cytoplasm. The enzyme catalyses L-seryl-[isocitrate dehydrogenase] + ATP = O-phospho-L-seryl-[isocitrate dehydrogenase] + ADP + H(+). In terms of biological role, bifunctional enzyme which can phosphorylate or dephosphorylate isocitrate dehydrogenase (IDH) on a specific serine residue. This is a regulatory mechanism which enables bacteria to bypass the Krebs cycle via the glyoxylate shunt in response to the source of carbon. When bacteria are grown on glucose, IDH is fully active and unphosphorylated, but when grown on acetate or ethanol, the activity of IDH declines drastically concomitant with its phosphorylation. This is Isocitrate dehydrogenase kinase/phosphatase from Aromatoleum aromaticum (strain DSM 19018 / LMG 30748 / EbN1) (Azoarcus sp. (strain EbN1)).